Consider the following 239-residue polypeptide: Major prion protein (239 aa).

The signal sequence occupies residues M1 to C15. The tract at residues C15–K98 is disordered. Positions K16–Y31 are interaction with ADGRG6. The tract at residues K16–S222 is interaction with GRB2, ERI3 and SYN1. 5 repeat units span residues P44 to Q51, P52 to Q59, P60 to Q67, P68 to Q75, and P76 to Q83. Residues P44–Q83 form a 5 X 8 AA tandem repeats of P-H-G-G-G-W-G-Q region. Residues G47–T87 show a composition bias toward gly residues. 12 residues coordinate Cu(2+): H53, G54, G55, H61, G62, G63, H69, G70, G71, H77, G78, and G79. An intrachain disulfide couples C171 to C206. Residues N173 and N189 are each glycosylated (N-linked (GlcNAc...) asparagine). S222 carries GPI-anchor amidated serine lipidation. The propeptide at S223 to L239 is removed in mature form.

This sequence belongs to the prion family. As to quaternary structure, monomer and homodimer. Has a tendency to aggregate into amyloid fibrils containing a cross-beta spine, formed by a steric zipper of superposed beta-strands. Soluble oligomers may represent an intermediate stage on the path to fibril formation. Copper binding may promote oligomerization. Interacts with GRB2, APP, ERI3/PRNPIP and SYN1. Mislocalized cytosolically exposed PrP interacts with MGRN1; this interaction alters MGRN1 subcellular location and causes lysosomal enlargement. Interacts with APP. Interacts with KIAA1191. Interacts with ADGRG6.

The protein localises to the cell membrane. It localises to the golgi apparatus. Its primary physiological function is unclear. May play a role in neuronal development and synaptic plasticity. May be required for neuronal myelin sheath maintenance. May promote myelin homeostasis through acting as an agonist for ADGRG6 receptor. May play a role in iron uptake and iron homeostasis. Soluble oligomers are toxic to cultured neuroblastoma cells and induce apoptosis (in vitro). Association with GPC1 (via its heparan sulfate chains) targets PRNP to lipid rafts. Also provides Cu(2+) or Zn(2+) for the ascorbate-mediated GPC1 deaminase degradation of its heparan sulfate side chains. This is Major prion protein (PRNP) from Aotus trivirgatus (Three-striped night monkey).